A 183-amino-acid polypeptide reads, in one-letter code: Caltractin ICL1c (183 aa).

The tract at residues 1 to 30 (MARRGQQPPPQQQQAPPTQKNQAGKFNPAE) is disordered. 4 consecutive EF-hand domains span residues 39-74 (EEVLEIKEAFDLFDTDGTQSIDPKELKAAMTSLGFE), 75-110 (AKNQTIYQMISDLDTDGSGQIDFAEFLKLMTARISE), 112-147 (DSKADIQKVFNLFDSERAGVITLKDLRKVAKELGET), and 148-183 (MDDSELQEMIDRADSDGDAQVTFEDFYNIMTKKTFA). The Ca(2+) site is built by Asp-52, Asp-54, Thr-56, Ser-58, Glu-63, Asp-88, Asp-90, Ser-92, Gln-94, and Glu-99.

This sequence belongs to the centrin family. Monomer.

The protein resides in the cytoplasm. It localises to the cytoskeleton. Plays a fundamental role in microtubule organizing center structure and function. Component of the infraciliary lattice (ICL) and the ciliary basal bodies. This is Caltractin ICL1c (Icl1c) from Paramecium tetraurelia.